Here is a 347-residue protein sequence, read N- to C-terminus: Holliday junction branch migration complex subunit RuvB (347 aa).

Positions 1 to 10 (MAIVSSSSGR) are enriched in polar residues. The disordered stretch occupies residues 1-29 (MAIVSSSSGRKSPCRETALVDPQPAPEEQ). The tract at residues 13 to 198 (PCRETALVDP…FGLIQRLEFY (186 aa)) is large ATPase domain (RuvB-L). 9 residues coordinate ATP: Leu37, Arg38, Gly79, Lys82, Thr83, Thr84, Arg188, Tyr198, and Arg235. Mg(2+) is bound at residue Thr83. Positions 199–270 (GQTDLEAIVA…MVAEALSLHR (72 aa)) are small ATPAse domain (RuvB-S). The tract at residues 273-347 (HRGLDASDRR…AARSHIAEAA (75 aa)) is head domain (RuvB-H). Residues Arg328 and Arg333 each coordinate DNA.

The protein belongs to the RuvB family. Homohexamer. Forms an RuvA(8)-RuvB(12)-Holliday junction (HJ) complex. HJ DNA is sandwiched between 2 RuvA tetramers; dsDNA enters through RuvA and exits via RuvB. An RuvB hexamer assembles on each DNA strand where it exits the tetramer. Each RuvB hexamer is contacted by two RuvA subunits (via domain III) on 2 adjacent RuvB subunits; this complex drives branch migration. In the full resolvosome a probable DNA-RuvA(4)-RuvB(12)-RuvC(2) complex forms which resolves the HJ.

It is found in the cytoplasm. The enzyme catalyses ATP + H2O = ADP + phosphate + H(+). The RuvA-RuvB-RuvC complex processes Holliday junction (HJ) DNA during genetic recombination and DNA repair, while the RuvA-RuvB complex plays an important role in the rescue of blocked DNA replication forks via replication fork reversal (RFR). RuvA specifically binds to HJ cruciform DNA, conferring on it an open structure. The RuvB hexamer acts as an ATP-dependent pump, pulling dsDNA into and through the RuvAB complex. RuvB forms 2 homohexamers on either side of HJ DNA bound by 1 or 2 RuvA tetramers; 4 subunits per hexamer contact DNA at a time. Coordinated motions by a converter formed by DNA-disengaged RuvB subunits stimulates ATP hydrolysis and nucleotide exchange. Immobilization of the converter enables RuvB to convert the ATP-contained energy into a lever motion, pulling 2 nucleotides of DNA out of the RuvA tetramer per ATP hydrolyzed, thus driving DNA branch migration. The RuvB motors rotate together with the DNA substrate, which together with the progressing nucleotide cycle form the mechanistic basis for DNA recombination by continuous HJ branch migration. Branch migration allows RuvC to scan DNA until it finds its consensus sequence, where it cleaves and resolves cruciform DNA. The chain is Holliday junction branch migration complex subunit RuvB from Synechococcus sp. (strain CC9902).